The chain runs to 502 residues: Glycerol kinase (502 aa).

Thr-14 contributes to the ADP binding site. Positions 14, 15, and 16 each coordinate ATP. Thr-14 is a binding site for sn-glycerol 3-phosphate. ADP is bound at residue Arg-18. Sn-glycerol 3-phosphate is bound by residues Arg-84, Glu-85, and Tyr-136. Arg-84, Glu-85, and Tyr-136 together coordinate glycerol. His-232 carries the phosphohistidine; by HPr modification. Asp-246 is a sn-glycerol 3-phosphate binding site. Glycerol-binding residues include Asp-246 and Gln-247. Thr-268 and Gly-311 together coordinate ADP. ATP is bound by residues Thr-268, Gly-311, Gln-315, and Gly-412. The ADP site is built by Gly-412 and Asn-416.

The protein belongs to the FGGY kinase family. In terms of assembly, homotetramer and homodimer (in equilibrium). In terms of processing, the phosphoenolpyruvate-dependent sugar phosphotransferase system (PTS), including enzyme I, and histidine-containing protein (HPr) are required for the phosphorylation, which leads to the activation of the enzyme.

It catalyses the reaction glycerol + ATP = sn-glycerol 3-phosphate + ADP + H(+). It participates in polyol metabolism; glycerol degradation via glycerol kinase pathway; sn-glycerol 3-phosphate from glycerol: step 1/1. Its activity is regulated as follows. Activated by phosphorylation and inhibited by fructose 1,6-bisphosphate (FBP). Its function is as follows. Key enzyme in the regulation of glycerol uptake and metabolism. Catalyzes the phosphorylation of glycerol to yield sn-glycerol 3-phosphate. The sequence is that of Glycerol kinase from Streptococcus pneumoniae serotype 2 (strain D39 / NCTC 7466).